Reading from the N-terminus, the 122-residue chain is Large ribosomal subunit protein uL14 (122 aa).

Belongs to the universal ribosomal protein uL14 family. In terms of assembly, part of the 50S ribosomal subunit. Forms a cluster with proteins L3 and L19. In the 70S ribosome, L14 and L19 interact and together make contacts with the 16S rRNA in bridges B5 and B8.

Binds to 23S rRNA. Forms part of two intersubunit bridges in the 70S ribosome. This is Large ribosomal subunit protein uL14 from Renibacterium salmoninarum (strain ATCC 33209 / DSM 20767 / JCM 11484 / NBRC 15589 / NCIMB 2235).